The primary structure comprises 360 residues: MDELLEKLLNDLKKKEPKACSIICIGEDLDIIQCMNEHGCFSGGSYSELSNDCETVNFRGIAYKCFFTKDQVKVNFWQISHLTGGLFNFLVSQALNEHGLDLLWIIMVVAQTLSALVSFPEKLLNILRNMKTILINTEETVRNRFEESQNKKLVALLDKNSTTLDISSGILLNFTVVLKQLKHALGLHTSVDNSQEFILQFLRTTLLSVPTSSIVSISADPTSWNNLNVLMKYNFMFQKFKPRDFHAQTIQSETMFIPPCWDTISKIQSVNHEFNIALFKQTAKNFYDTLDISLLLGLFDKSISMLNCHSSKISDGDIPYKSHQVFLQELQNKYSEIKTYSSNKLNKSSIKSSLWKDLIQ.

This sequence belongs to the dynein light intermediate chain DYN3 family. The dynein complex consists of at least two heavy chains and a number of intermediate and light chains. Interacts with rga3, sec10, sec16, syp1, rvb2, spbc19c7.04c, spbc2f12.05 and spac3a11.10c. The N-terminal part is acetylated.

The protein resides in the cytoplasm. It localises to the cytoskeleton. In terms of biological role, component of the cytoplasmic dynein which acts as a motor for the intracellular retrograde motility of vesicles and organelles along microtubules. Promotes oscillatory nuclear movement and efficient pairing of homologous centromeres during meiotic prophase. In Schizosaccharomyces pombe (strain 972 / ATCC 24843) (Fission yeast), this protein is Dynein intermediate light chain dil1 (dil1).